The sequence spans 121 residues: Large ribosomal subunit protein bL12 (121 aa).

It belongs to the bacterial ribosomal protein bL12 family. In terms of assembly, homodimer. Part of the ribosomal stalk of the 50S ribosomal subunit. Forms a multimeric L10(L12)X complex, where L10 forms an elongated spine to which 2 to 4 L12 dimers bind in a sequential fashion. Binds GTP-bound translation factors.

Functionally, forms part of the ribosomal stalk which helps the ribosome interact with GTP-bound translation factors. Is thus essential for accurate translation. This is Large ribosomal subunit protein bL12 from Malacoplasma penetrans (strain HF-2) (Mycoplasma penetrans).